Reading from the N-terminus, the 1706-residue chain is Histone acetyltransferase HAC12 (1706 aa).

4 disordered regions span residues 1–33, 251–284, 397–456, and 524–543; these read MNVQ…MQNL, TNNN…NSHM, VSRV…LGKT, and QNSQ…SDSS. Residues 397-406 are compositionally biased toward polar residues; sequence VSRVNSSLSH. Positions 407 to 434 are enriched in low complexity; that stretch reads QQQFQQPPNRFQQQPNQIQQQQQQFLNQ. Residues 637–716 form a TAZ-type 1 zinc finger; that stretch reads HDPKFKNQQR…DPRCPVCVPV (80 aa). The disordered stretch occupies residues 791 to 909; sequence TESCKSSIVS…PELTSKSRKP (119 aa). A compositionally biased stretch (polar residues) spans 794–805; the sequence is CKSSIVSTTEAD. Basic and acidic residues-rich tracts occupy residues 809–829 and 870–896; these read DAER…KVEI and PKQE…KEEL. Residues 998–1075 form a PHD-type zinc finger; it reads HYFCIPCYNE…EYTCPYCYVI (78 aa). The CBP/p300-type HAT domain occupies 1090 to 1526; sequence VLGAKDLPRT…VLYHLHNPTA (437 aa). Acetyl-CoA is bound by residues 1213–1215, 1232–1233, and W1288; these read LDS and RT. ZZ-type zinc fingers lie at residues 1408 to 1471 and 1528 to 1581; these read HLQH…IADI and AFVT…SLAD. Zn(2+)-binding residues include C1413, C1416, C1428, C1431, C1437, C1440, H1453, H1461, C1533, C1536, C1548, C1551, C1557, C1560, H1569, and H1571. Residues 1588–1671 form a TAZ-type 2 zinc finger; that stretch reads EARQLRVLQL…ECDVPRCGDL (84 aa).

The protein resides in the nucleus. The catalysed reaction is L-lysyl-[protein] + acetyl-CoA = N(6)-acetyl-L-lysyl-[protein] + CoA + H(+). Functionally, acetyltransferase enzyme. Acetylates histones, giving a specific tag for transcriptional activation. The protein is Histone acetyltransferase HAC12 (HAC12) of Arabidopsis thaliana (Mouse-ear cress).